Consider the following 103-residue polypeptide: Hexon-interlacing protein (103 aa).

The segment at arginine 25–serine 45 is disordered. Positions leucine 72–arginine 99 form a coiled coil.

The protein belongs to the adenoviridae hexon-interlacing protein family. Homotrimer. Interacts with hexon protein; this interaction tethers the hexons together. Self-interacts with adjacent proteins. Interacts with kinesin light chain KLC1; this interaction leads to capsid disruption at the nuclear pore complex during virus entry into host cell.

It is found in the virion. The protein resides in the host nucleus. Functionally, structural component of the virion that acts as a cement protein on the capsid exterior and forms triskelion structures consisting of three molecules that stabilize three hexon trimers at the center of each icosahedral facet and fixes the peripentonal hexons. Dispensable for assembly. During virus entry, recruits the anterograde motor kinesin-1 to the capsid docked at the nuclear pore complex thereby subjecting the docked capsid to a pulling force. The resulting tension leads to capsid disruption, dispersion of capsid fragments toward cell periphery and eventually viral DNA entry into the host nucleus. The polypeptide is Hexon-interlacing protein (Canine adenovirus serotype 1 (strain CLL) (CAdV-1)).